The following is a 314-amino-acid chain: tRNA dimethylallyltransferase (314 aa).

Residue 16-23 (GPTGVGKT) participates in ATP binding. 18-23 (TGVGKT) contributes to the substrate binding site. The segment at 41–44 (DSMQ) is interaction with substrate tRNA.

This sequence belongs to the IPP transferase family. Monomer. Mg(2+) serves as cofactor.

The enzyme catalyses adenosine(37) in tRNA + dimethylallyl diphosphate = N(6)-dimethylallyladenosine(37) in tRNA + diphosphate. Functionally, catalyzes the transfer of a dimethylallyl group onto the adenine at position 37 in tRNAs that read codons beginning with uridine, leading to the formation of N6-(dimethylallyl)adenosine (i(6)A). The polypeptide is tRNA dimethylallyltransferase (Desulfosudis oleivorans (strain DSM 6200 / JCM 39069 / Hxd3) (Desulfococcus oleovorans)).